A 150-amino-acid polypeptide reads, in one-letter code: Ribosomal RNA large subunit methyltransferase H (150 aa).

Residues leucine 68, glycine 97, and 116-121 contribute to the S-adenosyl-L-methionine site; that span reads LSAMTL.

The protein belongs to the RNA methyltransferase RlmH family. Homodimer.

The protein localises to the cytoplasm. It carries out the reaction pseudouridine(1915) in 23S rRNA + S-adenosyl-L-methionine = N(3)-methylpseudouridine(1915) in 23S rRNA + S-adenosyl-L-homocysteine + H(+). Functionally, specifically methylates the pseudouridine at position 1915 (m3Psi1915) in 23S rRNA. In Prochlorococcus marinus (strain MIT 9303), this protein is Ribosomal RNA large subunit methyltransferase H.